A 339-amino-acid polypeptide reads, in one-letter code: Phenylalanine--tRNA ligase alpha subunit (339 aa).

A Mg(2+)-binding site is contributed by E254.

It belongs to the class-II aminoacyl-tRNA synthetase family. Phe-tRNA synthetase alpha subunit type 1 subfamily. In terms of assembly, tetramer of two alpha and two beta subunits. Mg(2+) is required as a cofactor.

The protein localises to the cytoplasm. The enzyme catalyses tRNA(Phe) + L-phenylalanine + ATP = L-phenylalanyl-tRNA(Phe) + AMP + diphosphate + H(+). This chain is Phenylalanine--tRNA ligase alpha subunit, found in Dictyoglomus thermophilum (strain ATCC 35947 / DSM 3960 / H-6-12).